The following is a 269-amino-acid chain: Neurotrophic factor BDNF precursor form (269 aa).

The N-terminal stretch at 1–18 is a signal peptide; it reads MTILFLTMVISYFSCMRA. Positions 19 to 150 are excised as a propeptide; that stretch reads APLRDAPGMR…AANMSMRVRR (132 aa). Disordered stretches follow at residues 39–61 and 82–104; these read AATA…REEL and AAHV…VATA. The N-linked (GlcNAc...) asparagine glycan is linked to Asn-143. Disulfide bonds link Cys-163-Cys-230, Cys-208-Cys-259, and Cys-218-Cys-261.

The protein belongs to the NGF-beta family.

Its function is as follows. BDNF promotes the survival of neuronal populations that are all located either in the central nervous system or directly connected to it. The protein is Neurotrophic factor BDNF precursor form (bdnf) of Xiphophorus maculatus (Southern platyfish).